We begin with the raw amino-acid sequence, 127 residues long: MAKEQKEVRDLQEGNYVMMEDAACQINAYSTAKPGKHGSAKARIEAEGVFDGKKRSLSQPVDAKIWVPIVNRKQGQIVSKESDTVAQVMDLETYETVTMQIPGELDIQADENIEYLEFEGQRKILQE.

A Hypusine modification is found at lysine 36.

Belongs to the eIF-5A family.

The protein resides in the cytoplasm. In terms of biological role, functions by promoting the formation of the first peptide bond. This is Translation initiation factor 5A (eif5a) from Halobacterium salinarum (strain ATCC 700922 / JCM 11081 / NRC-1) (Halobacterium halobium).